The chain runs to 208 residues: Urease accessory protein UreG 2 (208 aa).

16–23 contacts GTP; that stretch reads GPVGSGKT.

This sequence belongs to the SIMIBI class G3E GTPase family. UreG subfamily. In terms of assembly, homodimer. UreD, UreF and UreG form a complex that acts as a GTP-hydrolysis-dependent molecular chaperone, activating the urease apoprotein by helping to assemble the nickel containing metallocenter of UreC. The UreE protein probably delivers the nickel.

The protein localises to the cytoplasm. Facilitates the functional incorporation of the urease nickel metallocenter. This process requires GTP hydrolysis, probably effectuated by UreG. The chain is Urease accessory protein UreG 2 from Methylobacterium radiotolerans (strain ATCC 27329 / DSM 1819 / JCM 2831 / NBRC 15690 / NCIMB 10815 / 0-1).